The following is a 121-amino-acid chain: Small ribosomal subunit protein bS6 (121 aa).

It belongs to the bacterial ribosomal protein bS6 family.

In terms of biological role, binds together with bS18 to 16S ribosomal RNA. The sequence is that of Small ribosomal subunit protein bS6 (rpsF) from Rickettsia prowazekii (strain Madrid E).